A 497-amino-acid polypeptide reads, in one-letter code: Guanosine-5'-triphosphate,3'-diphosphate pyrophosphatase (497 aa).

Belongs to the GppA/Ppx family. GppA subfamily.

The enzyme catalyses guanosine 3'-diphosphate 5'-triphosphate + H2O = guanosine 3',5'-bis(diphosphate) + phosphate + H(+). Its pathway is purine metabolism; ppGpp biosynthesis; ppGpp from GTP: step 2/2. Functionally, catalyzes the conversion of pppGpp to ppGpp. Guanosine pentaphosphate (pppGpp) is a cytoplasmic signaling molecule which together with ppGpp controls the 'stringent response', an adaptive process that allows bacteria to respond to amino acid starvation, resulting in the coordinated regulation of numerous cellular activities. This chain is Guanosine-5'-triphosphate,3'-diphosphate pyrophosphatase, found in Aliivibrio fischeri (strain MJ11) (Vibrio fischeri).